An 879-amino-acid polypeptide reads, in one-letter code: Alanine--tRNA ligase (879 aa).

The Zn(2+) site is built by His-564, His-568, Cys-666, and His-670.

The protein belongs to the class-II aminoacyl-tRNA synthetase family. Zn(2+) is required as a cofactor.

It is found in the cytoplasm. It catalyses the reaction tRNA(Ala) + L-alanine + ATP = L-alanyl-tRNA(Ala) + AMP + diphosphate. Catalyzes the attachment of alanine to tRNA(Ala) in a two-step reaction: alanine is first activated by ATP to form Ala-AMP and then transferred to the acceptor end of tRNA(Ala). Also edits incorrectly charged Ser-tRNA(Ala) and Gly-tRNA(Ala) via its editing domain. This Crocosphaera subtropica (strain ATCC 51142 / BH68) (Cyanothece sp. (strain ATCC 51142)) protein is Alanine--tRNA ligase.